The primary structure comprises 1511 residues: DNA-directed RNA polymerase subunit beta' (1511 aa).

Positions 75, 77, 90, and 93 each coordinate Zn(2+). Asp-474, Asp-476, and Asp-478 together coordinate Mg(2+). Zn(2+) is bound by residues Cys-804, Cys-878, Cys-885, and Cys-888.

This sequence belongs to the RNA polymerase beta' chain family. In terms of assembly, the RNAP catalytic core consists of 2 alpha, 1 beta, 1 beta' and 1 omega subunit. When a sigma factor is associated with the core the holoenzyme is formed, which can initiate transcription. Requires Mg(2+) as cofactor. The cofactor is Zn(2+).

It carries out the reaction RNA(n) + a ribonucleoside 5'-triphosphate = RNA(n+1) + diphosphate. In terms of biological role, DNA-dependent RNA polymerase catalyzes the transcription of DNA into RNA using the four ribonucleoside triphosphates as substrates. This chain is DNA-directed RNA polymerase subunit beta', found in Aliarcobacter butzleri (strain RM4018) (Arcobacter butzleri).